Consider the following 358-residue polypeptide: 4-hydroxy-3-methylbut-2-en-1-yl diphosphate synthase (flavodoxin) (358 aa).

[4Fe-4S] cluster contacts are provided by Cys-270, Cys-273, Cys-305, and Glu-312.

The protein belongs to the IspG family. Requires [4Fe-4S] cluster as cofactor.

The enzyme catalyses (2E)-4-hydroxy-3-methylbut-2-enyl diphosphate + oxidized [flavodoxin] + H2O + 2 H(+) = 2-C-methyl-D-erythritol 2,4-cyclic diphosphate + reduced [flavodoxin]. It functions in the pathway isoprenoid biosynthesis; isopentenyl diphosphate biosynthesis via DXP pathway; isopentenyl diphosphate from 1-deoxy-D-xylulose 5-phosphate: step 5/6. In terms of biological role, converts 2C-methyl-D-erythritol 2,4-cyclodiphosphate (ME-2,4cPP) into 1-hydroxy-2-methyl-2-(E)-butenyl 4-diphosphate. This Vesicomyosocius okutanii subsp. Calyptogena okutanii (strain HA) protein is 4-hydroxy-3-methylbut-2-en-1-yl diphosphate synthase (flavodoxin).